A 210-amino-acid polypeptide reads, in one-letter code: FMN-dependent NADH:quinone oxidoreductase (210 aa).

FMN is bound by residues Ser9 and 15–17 (SHS).

Belongs to the azoreductase type 1 family. As to quaternary structure, homodimer. It depends on FMN as a cofactor.

The catalysed reaction is 2 a quinone + NADH + H(+) = 2 a 1,4-benzosemiquinone + NAD(+). It catalyses the reaction N,N-dimethyl-1,4-phenylenediamine + anthranilate + 2 NAD(+) = 2-(4-dimethylaminophenyl)diazenylbenzoate + 2 NADH + 2 H(+). Its function is as follows. Quinone reductase that provides resistance to thiol-specific stress caused by electrophilic quinones. Functionally, also exhibits azoreductase activity. Catalyzes the reductive cleavage of the azo bond in aromatic azo compounds to the corresponding amines. The protein is FMN-dependent NADH:quinone oxidoreductase of Mesorhizobium japonicum (strain LMG 29417 / CECT 9101 / MAFF 303099) (Mesorhizobium loti (strain MAFF 303099)).